The sequence spans 303 residues: GTPase Era (303 aa).

Positions 8–176 (YCGFIAIVGR…ASIVRKHMPE (169 aa)) constitute an Era-type G domain. A G1 region spans residues 16–23 (GRPNVGKS). Position 16 to 23 (16 to 23 (GRPNVGKS)) interacts with GTP. Positions 42-46 (QTTRH) are G2. The G3 stretch occupies residues 63–66 (DTPG). Residues 63-67 (DTPGL) and 125-128 (NKVD) each bind GTP. A G4 region spans residues 125–128 (NKVD). The interval 155-157 (ISA) is G5. The region spanning 207–284 (LGEELPYSVT…HLELWVKVKS (78 aa)) is the KH type-2 domain.

The protein belongs to the TRAFAC class TrmE-Era-EngA-EngB-Septin-like GTPase superfamily. Era GTPase family. Monomer.

The protein resides in the cytoplasm. It localises to the cell inner membrane. Its function is as follows. An essential GTPase that binds both GDP and GTP, with rapid nucleotide exchange. Plays a role in 16S rRNA processing and 30S ribosomal subunit biogenesis and possibly also in cell cycle regulation and energy metabolism. The protein is GTPase Era of Yersinia enterocolitica serotype O:8 / biotype 1B (strain NCTC 13174 / 8081).